Here is a 605-residue protein sequence, read N- to C-terminus: Glycerophosphodiester phosphodiesterase domain-containing protein 5 (605 aa).

Topologically, residues 1–42 (MVRHQPLQYYEPQLCLSCLTGIYGCRWKRYQRSHDDTTPWER) are cytoplasmic. Disulfide bonds link C15–C18 and C25–C571. The helical transmembrane segment at 43–63 (LWFLLLTFTFGLTLTWLYFWW) threads the bilayer. Over 64–89 (EVHNDYDEFNWYLYNRMGYWSDWPVP) the chain is Extracellular. The chain crosses the membrane as a helical span at residues 90-110 (ILVTTAAAFAYIAGLLVLALC). At 111 to 125 (HIAVGQQMNLHWLHK) the chain is on the cytoplasmic side. The helical transmembrane segment at 126-146 (IGLVVILASTVVAMSAVAQLW) threads the bilayer. The Extracellular portion of the chain corresponds to 147–160 (EDEWEVLLISLQGT). Residues 161 to 181 (APFLHVGAVAAVTMLSWIVAG) form a helical membrane-spanning segment. Residues 182–192 (QFARAERTSSQ) lie on the Cytoplasmic side of the membrane. The helical transmembrane segment at 193 to 213 (VTILCTFFTVVFALYLAPLTI) threads the bilayer. Residues 214-496 (SSPCIMEKKD…PLWIMPPDEY (283 aa)) are Extracellular-facing. A GP-PDE domain is found at 228-485 (PALIGHRGAP…DNSHALSQVP (258 aa)). N301, N336, N352, N374, and N448 each carry an N-linked (GlcNAc...) asparagine glycan. A helical membrane pass occupies residues 497–517 (CLMWVTADLVSFTLIVGIFVL). The Cytoplasmic portion of the chain corresponds to 518 to 605 (QKWRLGGIRS…TKTLIERSGR (88 aa)). The interval 582–605 (STATPVGPRGGGSHTKTLIERSGR) is disordered.

This sequence belongs to the glycerophosphoryl diester phosphodiesterase family. In terms of assembly, interacts with PRDX1; forms a mixed-disulfide with PRDX1, leading to disrupt intramolecular disulfide bond between Cys-25 and Cys-571. Post-translationally, intramolecular disulfide bond between Cys-25 and Cys-571 is reduced by PRDX1.

It localises to the endomembrane system. The protein localises to the cytoplasm. The protein resides in the perinuclear region. Its subcellular location is the cell projection. It is found in the growth cone. The enzyme catalyses a 1,2-diacyl-sn-glycero-3-phospho-(1D-myo-inositol-4,5-bisphosphate) + H2O = 1D-myo-inositol 1,4,5-trisphosphate + a 1,2-diacyl-sn-glycerol + H(+). It catalyses the reaction sn-glycerol 3-phosphocholine + H2O = sn-glycerol 3-phosphate + choline + H(+). In terms of biological role, glycerophosphodiester phosphodiesterase that promotes neurite formation and drives spinal motor neuron differentiation. Mediates the cleavage of glycosylphosphatidylinositol (GPI) anchor of target proteins: removes the GPI-anchor of RECK, leading to release RECK from the plasma membrane. May contribute to the osmotic regulation of cellular glycerophosphocholine. In Homo sapiens (Human), this protein is Glycerophosphodiester phosphodiesterase domain-containing protein 5.